Consider the following 229-residue polypeptide: ATP synthase subunit a (229 aa).

6 helical membrane-spanning segments follow: residues 14–34, 68–88, 98–118, 124–144, 157–179, and 189–209; these read LIAI…ALIL, YFPF…LGLF, IVVT…GGLW, FLSI…LVLI, GVRL…GFGF, and NIFP…VAVI.

This sequence belongs to the ATPase A chain family. F-type ATPases have 2 components, CF(1) - the catalytic core - and CF(0) - the membrane proton channel. CF(1) has five subunits: alpha(3), beta(3), gamma(1), delta(1), epsilon(1). CF(0) has three main subunits: a, b and c.

Its subcellular location is the mitochondrion inner membrane. Mitochondrial membrane ATP synthase (F(1)F(0) ATP synthase or Complex V) produces ATP from ADP in the presence of a proton gradient across the membrane which is generated by electron transport complexes of the respiratory chain. F-type ATPases consist of two structural domains, F(1) - containing the extramembraneous catalytic core and F(0) - containing the membrane proton channel, linked together by a central stalk and a peripheral stalk. During catalysis, ATP synthesis in the catalytic domain of F(1) is coupled via a rotary mechanism of the central stalk subunits to proton translocation. Key component of the proton channel; it may play a direct role in the translocation of protons across the membrane. The sequence is that of ATP synthase subunit a (ATPASE6) from Metridium senile (Brown sea anemone).